A 434-amino-acid chain; its full sequence is DENN domain-containing protein 11 (434 aa).

The interval 1-29 is disordered; it reads MARRTDRAPLLDWAEGPGVSPAPETEQGE. The 168-residue stretch at 1–168 folds into the uDENN domain; that stretch reads MARRTDRAPL…QLEIPGHYTP (168 aa). Residues 194–341 enclose the cDENN domain; the sequence is LPPVHKHLYP…VNSADKEKYQ (148 aa). Positions 343-434 constitute a dDENN domain; sequence LNDQRQLLMY…MLVIDNPCCP (92 aa).

It belongs to the DENND11 family.

In terms of biological role, probable guanine nucleotide exchange factor (GEF). May promote the exchange of GDP to GTP, converting inactive GDP-bound small GTPases into their active GTP-bound form. This chain is DENN domain-containing protein 11 (dennd11), found in Xenopus laevis (African clawed frog).